The sequence spans 533 residues: Drimenyl diphosphate synthase (533 aa).

(2E,6E)-farnesyl diphosphate is bound by residues Arg-132, Lys-133, Gln-163, and Trp-165. Glu-169 is a Mg(2+) binding site. PFTB repeat units follow at residues 274–316, 324–366, 372–415, 425–466, and 474–517; these read VTPM…RRAA, VAEA…AHDP, VDEA…AAHG, AERA…ARGP, and LDRA…FVLL. Asp-303 functions as the Proton donor in the catalytic mechanism. A (2E,6E)-farnesyl diphosphate-binding site is contributed by Arg-501.

The protein belongs to the terpene cyclase/mutase family. It depends on Mg(2+) as a cofactor. Requires Ni(2+) as cofactor. The cofactor is Co(2+).

It catalyses the reaction (2E,6E)-farnesyl diphosphate = (5S,9S,10S)-drim-7-en-11-yl diphosphate. In terms of biological role, catalyzes the cyclization of farnesyl diphosphate (FPP) to drimenyl diphosphate. Cannot use geranylgeranyl diphosphate (GGPP) as substrate. The protein is Drimenyl diphosphate synthase of Streptomyces showdoensis.